Reading from the N-terminus, the 482-residue chain is tRNA sulfurtransferase (482 aa).

One can recognise a THUMP domain in the interval 61–165; the sequence is LAIRDALTRI…DDRLLLIKGR (105 aa). Residues 183-184, K265, G287, and Q296 contribute to the ATP site; that span reads LI. A disulfide bridge connects residues C344 and C456. One can recognise a Rhodanese domain in the interval 404 to 482; it reads FGPNDVILDI…GFANVKVYRP (79 aa). Catalysis depends on C456, which acts as the Cysteine persulfide intermediate.

Belongs to the ThiI family.

It is found in the cytoplasm. It catalyses the reaction [ThiI sulfur-carrier protein]-S-sulfanyl-L-cysteine + a uridine in tRNA + 2 reduced [2Fe-2S]-[ferredoxin] + ATP + H(+) = [ThiI sulfur-carrier protein]-L-cysteine + a 4-thiouridine in tRNA + 2 oxidized [2Fe-2S]-[ferredoxin] + AMP + diphosphate. The catalysed reaction is [ThiS sulfur-carrier protein]-C-terminal Gly-Gly-AMP + S-sulfanyl-L-cysteinyl-[cysteine desulfurase] + AH2 = [ThiS sulfur-carrier protein]-C-terminal-Gly-aminoethanethioate + L-cysteinyl-[cysteine desulfurase] + A + AMP + 2 H(+). The protein operates within cofactor biosynthesis; thiamine diphosphate biosynthesis. Catalyzes the ATP-dependent transfer of a sulfur to tRNA to produce 4-thiouridine in position 8 of tRNAs, which functions as a near-UV photosensor. Also catalyzes the transfer of sulfur to the sulfur carrier protein ThiS, forming ThiS-thiocarboxylate. This is a step in the synthesis of thiazole, in the thiamine biosynthesis pathway. The sulfur is donated as persulfide by IscS. The polypeptide is tRNA sulfurtransferase (Salmonella choleraesuis (strain SC-B67)).